The primary structure comprises 549 residues: Lipase 5 (549 aa).

Positions 1 to 15 (MKLALALSLIASVAA) are cleaved as a signal peptide. A disulfide bond links cysteine 75 and cysteine 112. Serine 224 serves as the catalytic Acyl-ester intermediate. A disulfide bond links cysteine 283 and cysteine 292. Asparagine 329 carries N-linked (GlcNAc...) asparagine glycosylation. Glutamate 356 acts as the Charge relay system in catalysis. Asparagine 366 is a glycosylation site (N-linked (GlcNAc...) asparagine). Histidine 464 (charge relay system) is an active-site residue.

Belongs to the type-B carboxylesterase/lipase family.

The catalysed reaction is a triacylglycerol + H2O = a diacylglycerol + a fatty acid + H(+). The sequence is that of Lipase 5 (LIP5) from Diutina rugosa (Yeast).